The primary structure comprises 37 residues: Cytochrome b6-f complex subunit 5 (37 aa).

A helical membrane pass occupies residues 5 to 25; it reads FLFGIVLGLIPITLAGLFVTA.

The protein belongs to the PetG family. In terms of assembly, the 4 large subunits of the cytochrome b6-f complex are cytochrome b6, subunit IV (17 kDa polypeptide, PetD), cytochrome f and the Rieske protein, while the 4 small subunits are PetG, PetL, PetM and PetN. The complex functions as a dimer.

It localises to the plastid. The protein localises to the chloroplast thylakoid membrane. Its function is as follows. Component of the cytochrome b6-f complex, which mediates electron transfer between photosystem II (PSII) and photosystem I (PSI), cyclic electron flow around PSI, and state transitions. PetG is required for either the stability or assembly of the cytochrome b6-f complex. In Platanus occidentalis (Sycamore), this protein is Cytochrome b6-f complex subunit 5.